Here is a 271-residue protein sequence, read N- to C-terminus: Protein phosphatase 1 regulatory subunit 3B-B (271 aa).

The short motif at 56-59 (RVSF) is the PP1-binding motif element. Positions 119 to 227 (RNRLKADSVC…SNKGLNYRIV (109 aa)) constitute a CBM21 domain.

Interacts with glycogen, PPP1CC catalytic subunit of PP1 and PYGL. Associates with glycogen particles. Forms complexes with debranching enzyme, glycogen phosphorylase, glycogen synthase and phosphorylase kinase which is necessary for its regulation of PP1 activity.

Functionally, acts as a glycogen-targeting subunit for phosphatase PP1. Facilitates interaction of the PP1 with enzymes of the glycogen metabolism and regulates its activity. Suppresses the rate at which PP1 dephosphorylates (inactivates) glycogen phosphorylase and enhances the rate at which it activates glycogen synthase and therefore limits glycogen breakdown. The polypeptide is Protein phosphatase 1 regulatory subunit 3B-B (ppp1r3b-b) (Xenopus laevis (African clawed frog)).